Here is a 325-residue protein sequence, read N- to C-terminus: Acetyl-coenzyme A carboxylase carboxyl transferase subunit alpha (325 aa).

One can recognise a CoA carboxyltransferase C-terminal domain in the interval 44 to 298 (QLEGRAEQLR…KTAILSNLEE (255 aa)).

It belongs to the AccA family. Acetyl-CoA carboxylase is a heterohexamer composed of biotin carboxyl carrier protein (AccB), biotin carboxylase (AccC) and two subunits each of ACCase subunit alpha (AccA) and ACCase subunit beta (AccD).

The protein localises to the cytoplasm. It catalyses the reaction N(6)-carboxybiotinyl-L-lysyl-[protein] + acetyl-CoA = N(6)-biotinyl-L-lysyl-[protein] + malonyl-CoA. The protein operates within lipid metabolism; malonyl-CoA biosynthesis; malonyl-CoA from acetyl-CoA: step 1/1. Functionally, component of the acetyl coenzyme A carboxylase (ACC) complex. First, biotin carboxylase catalyzes the carboxylation of biotin on its carrier protein (BCCP) and then the CO(2) group is transferred by the carboxyltransferase to acetyl-CoA to form malonyl-CoA. The chain is Acetyl-coenzyme A carboxylase carboxyl transferase subunit alpha from Acaryochloris marina (strain MBIC 11017).